The sequence spans 345 residues: tRNA N6-adenosine threonylcarbamoyltransferase (345 aa).

The Fe cation site is built by H111 and H115. Substrate-binding positions include 134–138, D167, G180, and N276; that span reads LVSGG. D304 is a Fe cation binding site.

Belongs to the KAE1 / TsaD family. The cofactor is Fe(2+).

It is found in the cytoplasm. The catalysed reaction is L-threonylcarbamoyladenylate + adenosine(37) in tRNA = N(6)-L-threonylcarbamoyladenosine(37) in tRNA + AMP + H(+). Required for the formation of a threonylcarbamoyl group on adenosine at position 37 (t(6)A37) in tRNAs that read codons beginning with adenine. Is involved in the transfer of the threonylcarbamoyl moiety of threonylcarbamoyl-AMP (TC-AMP) to the N6 group of A37, together with TsaE and TsaB. TsaD likely plays a direct catalytic role in this reaction. This is tRNA N6-adenosine threonylcarbamoyltransferase from Bordetella avium (strain 197N).